We begin with the raw amino-acid sequence, 585 residues long: Arginine--tRNA ligase (585 aa).

The 'HIGH' region motif lies at 131–141; sequence ANPTGPMHVGH.

This sequence belongs to the class-I aminoacyl-tRNA synthetase family. In terms of assembly, monomer.

It is found in the cytoplasm. The enzyme catalyses tRNA(Arg) + L-arginine + ATP = L-arginyl-tRNA(Arg) + AMP + diphosphate. The chain is Arginine--tRNA ligase from Brucella anthropi (strain ATCC 49188 / DSM 6882 / CCUG 24695 / JCM 21032 / LMG 3331 / NBRC 15819 / NCTC 12168 / Alc 37) (Ochrobactrum anthropi).